The chain runs to 186 residues: Methyl-CpG-binding domain-containing protein 4 (186 aa).

The segment at 22–77 (GRLIDTYAAQCDNCHKWRVIDSQEEYEDIRSKMLEDPFNCQKKQGMSCEEPADIDY) adopts a CW-type zinc-finger fold. The MBD-associated domain (MAD) signature appears at 31 to 69 (QCDNCHKWRVIDSQEEYEDIRSKMLEDPFNCQKKQGMSC). Residues C32, C35, C61, and C69 each coordinate Zn(2+). One can recognise an MBD domain in the interval 83–153 (WVIDKPGLPK…GDFNFTVPKV (71 aa)). Positions 154–186 (MEDTVPPDPKLGSPFPSTTTTTSEKSSVKQSHN) are disordered. Over residues 166-178 (SPFPSTTTTTSEK) the composition is skewed to low complexity.

As to expression, expressed in rosette leaves, buds, flowers, stems, mature seeds and roots.

The protein resides in the nucleus. Its function is as follows. Transcriptional regulator that binds CpG, CpNpN and CpNpG (N is A, T, or C) islands in promoters regardless the DNA methylation status. Plays probably a role in gene silencing. In Arabidopsis thaliana (Mouse-ear cress), this protein is Methyl-CpG-binding domain-containing protein 4 (MBD4).